The chain runs to 163 residues: Shikimate kinase (163 aa).

10-15 (GVGKTT) is an ATP binding site. Threonine 14 provides a ligand contact to Mg(2+). Substrate is bound by residues aspartate 28, arginine 52, and glycine 75. Arginine 116 provides a ligand contact to ATP. A substrate-binding site is contributed by arginine 134. Arginine 151 is a binding site for ATP.

The protein belongs to the shikimate kinase family. Monomer. Mg(2+) is required as a cofactor.

The protein resides in the cytoplasm. It catalyses the reaction shikimate + ATP = 3-phosphoshikimate + ADP + H(+). It functions in the pathway metabolic intermediate biosynthesis; chorismate biosynthesis; chorismate from D-erythrose 4-phosphate and phosphoenolpyruvate: step 5/7. Functionally, catalyzes the specific phosphorylation of the 3-hydroxyl group of shikimic acid using ATP as a cosubstrate. The polypeptide is Shikimate kinase (Streptococcus pyogenes serotype M12 (strain MGAS2096)).